Consider the following 66-residue polypeptide: Potassium channel toxin alpha-KTx 27.3 (66 aa).

An N-terminal signal peptide occupies residues 1–17; the sequence is MKLMWLLFLCVLAFSIA.

It belongs to the short scorpion toxin superfamily. Potassium channel inhibitor family. Alpha-KTx 27 subfamily. Contains 4 disulfide bonds. Expressed by the venom gland.

The protein localises to the secreted. The chain is Potassium channel toxin alpha-KTx 27.3 from Lychas mucronatus (Chinese swimming scorpion).